Consider the following 422-residue polypeptide: UDP-N-acetylmuramoylalanine--D-glutamate ligase (422 aa).

An ATP-binding site is contributed by 102–108; it reads GTNGKTT.

Belongs to the MurCDEF family.

Its subcellular location is the cytoplasm. It carries out the reaction UDP-N-acetyl-alpha-D-muramoyl-L-alanine + D-glutamate + ATP = UDP-N-acetyl-alpha-D-muramoyl-L-alanyl-D-glutamate + ADP + phosphate + H(+). It functions in the pathway cell wall biogenesis; peptidoglycan biosynthesis. In terms of biological role, cell wall formation. Catalyzes the addition of glutamate to the nucleotide precursor UDP-N-acetylmuramoyl-L-alanine (UMA). The protein is UDP-N-acetylmuramoylalanine--D-glutamate ligase of Helicobacter pylori (strain ATCC 700392 / 26695) (Campylobacter pylori).